A 168-amino-acid polypeptide reads, in one-letter code: Large ribosomal subunit protein uL10 (168 aa).

Belongs to the universal ribosomal protein uL10 family. In terms of assembly, part of the ribosomal stalk of the 50S ribosomal subunit. The N-terminus interacts with L11 and the large rRNA to form the base of the stalk. The C-terminus forms an elongated spine to which L12 dimers bind in a sequential fashion forming a multimeric L10(L12)X complex.

In terms of biological role, forms part of the ribosomal stalk, playing a central role in the interaction of the ribosome with GTP-bound translation factors. The polypeptide is Large ribosomal subunit protein uL10 (rplJ) (Mycoplasmopsis pulmonis (strain UAB CTIP) (Mycoplasma pulmonis)).